The chain runs to 111 residues: uncharacterized protein (111 aa).

This is an uncharacterized protein from Enterococcus faecalis (strain ATCC 700802 / V583).